The chain runs to 197 residues: MEDHPVREEEDGEEDEGALAKSPLQLTTDDVYDISYVVGRELMALGSDPRVTRLQFKIVRVMEMLETLVNEGSLAVEELRMERDNLKQEVEGLRKAGVSGAQVNLGPDKMVVDLTDPNRPRFTLQELREVLQERNKLKSQLLLVQEELQCYRSGLLPPRETPGGRREKDAVVAMGNGEKEERTIMKKLFSFRSGKHT.

The interval 1 to 24 is disordered; it reads MEDHPVREEEDGEEDEGALAKSPL. The segment covering 8-17 has biased composition (acidic residues); it reads EEEDGEEDEG. The region spanning 14 to 96 is the RH1 domain; it reads EDEGALAKSP…KQEVEGLRKA (83 aa). Residues 69-153 adopt a coiled-coil conformation; it reads VNEGSLAVEE…VQEELQCYRS (85 aa). The region spanning 119–184 is the RH2 domain; sequence RPRFTLQELR…GNGEKEERTI (66 aa).

This sequence belongs to the RILPL family. As to quaternary structure, homodimer. Interacts with RAC1. Interacts (via N-terminus) with MYO5A, the interaction is required for its role in dendrite formation. Interacts with RAB8A; interaction is dependent on the phosphorylation of RAB8A on 'Thr-72'. Interacts with RAB10 and RAB12; interaction is dependent on the phosphorylation of 'Thr-73' on RAB10 and 'Ser-105' on RAB12.

It localises to the cytoplasm. The protein localises to the cytosol. It is found in the cytoskeleton. The protein resides in the microtubule organizing center. Its subcellular location is the centrosome. It localises to the cell projection. The protein localises to the cilium. Functionally, involved in cell shape and neuronal morphogenesis, positively regulating the establishment and maintenance of dendritic spines. Plays a role in cellular protein transport, including protein transport away from primary cilia. May function via activation of RAC1 and PAK1. This Mus musculus (Mouse) protein is RILP-like protein 2 (Rilpl2).